Reading from the N-terminus, the 191-residue chain is Putative 3-methyladenine DNA glycosylase (191 aa).

The protein belongs to the DNA glycosylase MPG family.

The sequence is that of Putative 3-methyladenine DNA glycosylase from Cutibacterium acnes (strain DSM 16379 / KPA171202) (Propionibacterium acnes).